A 118-amino-acid polypeptide reads, in one-letter code: Large ribosomal subunit protein eL22 (118 aa).

It belongs to the eukaryotic ribosomal protein eL22 family.

The chain is Large ribosomal subunit protein eL22 (RPL22) from Tetrahymena thermophila (strain SB210).